The following is a 106-amino-acid chain: Putative double-stranded DNA mimic protein VP1949 (106 aa).

It belongs to the putative dsDNA mimic protein family.

May act as a double-stranded DNA (dsDNA) mimic. Probably regulates the activity of a dsDNA-binding protein. The polypeptide is Putative double-stranded DNA mimic protein VP1949 (Vibrio parahaemolyticus serotype O3:K6 (strain RIMD 2210633)).